The following is a 73-amino-acid chain: Cell division protein ZapB (73 aa).

Residues 3–66 (LELLSQLETK…SWSDKVNGLV (64 aa)) are a coiled coil.

This sequence belongs to the ZapB family. In terms of assembly, homodimer. The ends of the coiled-coil dimer bind to each other, forming polymers. Interacts with FtsZ.

The protein resides in the cytoplasm. Functionally, non-essential, abundant cell division factor that is required for proper Z-ring formation. It is recruited early to the divisome by direct interaction with FtsZ, stimulating Z-ring assembly and thereby promoting cell division earlier in the cell cycle. Its recruitment to the Z-ring requires functional FtsA or ZipA. The polypeptide is Cell division protein ZapB (Shewanella frigidimarina (strain NCIMB 400)).